The chain runs to 304 residues: Glutaminase (304 aa).

The substrate site is built by S63, N114, E158, N165, Y189, Y240, and V258.

This sequence belongs to the glutaminase family. Homotetramer.

The enzyme catalyses L-glutamine + H2O = L-glutamate + NH4(+). The protein is Glutaminase of Shewanella putrefaciens (strain CN-32 / ATCC BAA-453).